The chain runs to 1150 residues: PAN2-PAN3 deadenylation complex catalytic subunit PAN2 (1150 aa).

4 WD repeats span residues 26-67, 114-156, 158-194, and 290-328; these read AHHS…MEFQ, GHVN…ITKE, PAPN…VINT, and GHTH…VSFV. Positions 326 to 471 are linker; that stretch reads SFVDQGLPVE…IRTDIESLKS (146 aa). In terms of domain architecture, USP spans 472–862; that stretch reads VVPNMYHLFE…TPLVVMFQLK (391 aa). In terms of domain architecture, Exonuclease spans 911–1079; sequence AIDAEFVLAK…HDSIEDANTA (169 aa). 4 residues coordinate a divalent metal cation: aspartate 913, glutamate 915, aspartate 1022, and aspartate 1075. The segment at 1118-1150 is disordered; that stretch reads GQSAQRTETPPMVDDAQPGALLPYQPPELLQGS.

It belongs to the peptidase C19 family. PAN2 subfamily. As to quaternary structure, forms a heterotrimer with an asymmetric homodimer of the regulatory subunit PAN3 to form the poly(A)-nuclease (PAN) deadenylation complex. The cofactor is a divalent metal cation.

Its subcellular location is the cytoplasm. It catalyses the reaction Exonucleolytic cleavage of poly(A) to 5'-AMP.. With respect to regulation, positively regulated by the regulatory subunit PAN3. Functionally, catalytic subunit of the poly(A)-nuclease (PAN) deadenylation complex, one of two cytoplasmic mRNA deadenylases involved in mRNA turnover. PAN specifically shortens poly(A) tails of RNA and the activity is stimulated by poly(A)-binding protein PAB1. PAN deadenylation is followed by rapid degradation of the shortened mRNA tails by the CCR4-NOT complex. Deadenylated mRNAs are then degraded by two alternative mechanisms, namely exosome-mediated 3'-5' exonucleolytic degradation, or deadenylation-dependent mRNA decaping and subsequent 5'-3' exonucleolytic degradation by XRN1. May also be involved in post-transcriptional maturation of mRNA poly(A) tails. The sequence is that of PAN2-PAN3 deadenylation complex catalytic subunit PAN2 from Pyricularia oryzae (strain 70-15 / ATCC MYA-4617 / FGSC 8958) (Rice blast fungus).